A 460-amino-acid polypeptide reads, in one-letter code: Probable amino acid transporter skat-1 (460 aa).

A run of 10 helical transmembrane segments spans residues 64–84, 132–152, 172–192, 194–214, 236–256, 270–290, 316–336, 362–382, 383–403, and 426–446; these read LGGLWVSFVMSFVIAGLNWYG, FVNVTILFYQLGMCSVAILFI, MILMATVSLFFILLTNMFTEM, IVSFFALVSSVFFVIGAAVIM, TITMIGMSMYAFEGQTMILPI, FGVLSTTMIICTAFMTALGFF, VNVFLMLQSLLGNSIAMYVVY, GFRVFWVLVTYLMAVLIPKLE, IMIPLVGVTSGALCALIFPPF, and IFINLVVMAIGVFAIIAGVYT.

The protein belongs to the amino acid/polyamine transporter 2 family. As to expression, expressed in the head, tail, body and ventral nerve cord neurons, muscles of the vulva, and intestine.

The protein localises to the membrane. It localises to the cytoplasmic granule. Its function is as follows. Plays a role in the accumulation of vital dyes and endogenous fluorescent compounds in lysosome related organelles. Has an effect on lysosome related organelle (LRO) function, in a pathway with serotonin. In Caenorhabditis elegans, this protein is Probable amino acid transporter skat-1.